A 359-amino-acid polypeptide reads, in one-letter code: MSFTAPSDPVNKPTKVKVSQLCELCHSRKALIRRPKNLSKLCKQCFCLVFETEIHNTIVANNLFQRGEKVAVGASGGKDSTVLAHMLKLLNDRYDYGIEIVLLSIDEGIIGYRDDSLATVKRNQQQYGLPLEIFSFKDLYDWTMDEIVSVAGIRNSCTYCGVFRRQSLDRGAAKLGISHVVTGHNADDMAETVLMNILRGDVARLEKSTAIITQSSGSPIKRSKPFKYSYQKEIVLYAHYMKLDYFSTECTYAPEAFRGTAREYMKNLEAVRPSCIIDIIQSGENLALKAKKSNARKRVVKFVDGNRCARCGYLSSNNICKACMLLEGLEKSRAQVAIENDTSADGAALKLRALEKLSF.

This sequence belongs to the TtcA family. CTU1/NCS6/ATPBD3 subfamily. As to quaternary structure, interacts with NCS2 and URM1. May act by forming a heterodimer with NCS2. Component of a large molecular weight complex of more than 250 kDa.

It is found in the cytoplasm. Its subcellular location is the mitochondrion. The protein operates within tRNA modification; 5-methoxycarbonylmethyl-2-thiouridine-tRNA biosynthesis. In terms of biological role, plays a central role in 2-thiolation of mcm(5)S(2)U at tRNA wobble positions of tRNA(Lys), tRNA(Glu) and tRNA(Gln). Directly binds tRNAs and probably acts by catalyzing adenylation of tRNAs, an intermediate required for 2-thiolation. It is unclear whether it acts as a sulfurtransferase that transfers sulfur from thiocarboxylated URM1 onto the uridine of tRNAs at wobble position. Prior mcm(5) tRNA modification by the elongator complex is required for 2-thiolation. May also be involved in protein urmylation. This Saccharomyces cerevisiae (strain RM11-1a) (Baker's yeast) protein is Cytoplasmic tRNA 2-thiolation protein 1.